Consider the following 633-residue polypeptide: DNA mismatch repair protein MutL (633 aa).

The protein belongs to the DNA mismatch repair MutL/HexB family.

In terms of biological role, this protein is involved in the repair of mismatches in DNA. It is required for dam-dependent methyl-directed DNA mismatch repair. May act as a 'molecular matchmaker', a protein that promotes the formation of a stable complex between two or more DNA-binding proteins in an ATP-dependent manner without itself being part of a final effector complex. This chain is DNA mismatch repair protein MutL, found in Pseudomonas fluorescens (strain SBW25).